Consider the following 430-residue polypeptide: Enolase (430 aa).

(2R)-2-phosphoglycerate is bound at residue Gln-163. The active-site Proton donor is Glu-205. 3 residues coordinate Mg(2+): Asp-242, Glu-287, and Asp-314. Residues Lys-339, Arg-368, Ser-369, and Lys-390 each coordinate (2R)-2-phosphoglycerate. Lys-339 serves as the catalytic Proton acceptor.

It belongs to the enolase family. Mg(2+) is required as a cofactor.

It is found in the cytoplasm. The protein resides in the secreted. The protein localises to the cell surface. The catalysed reaction is (2R)-2-phosphoglycerate = phosphoenolpyruvate + H2O. Its pathway is carbohydrate degradation; glycolysis; pyruvate from D-glyceraldehyde 3-phosphate: step 4/5. Catalyzes the reversible conversion of 2-phosphoglycerate (2-PG) into phosphoenolpyruvate (PEP). It is essential for the degradation of carbohydrates via glycolysis. This chain is Enolase, found in Alkaliphilus metalliredigens (strain QYMF).